The following is a 295-amino-acid chain: Protease HtpX (295 aa).

The next 2 helical transmembrane spans lie at 5-25 (VILFLATNLAVLLVLSISMRL) and 43-63 (ALLIFAAIIGFSGSLISLAIS). H148 contributes to the Zn(2+) binding site. The active site involves E149. Residue H152 participates in Zn(2+) binding. The next 2 membrane-spanning stretches (helical) occupy residues 159–179 (VTLALIQGVVNTFVIFLARII) and 198–218 (FFITTLIAQTVLAILASLIVL). E225 is a Zn(2+) binding site.

The protein belongs to the peptidase M48B family. Zn(2+) is required as a cofactor.

It is found in the cell inner membrane. This is Protease HtpX from Nitrosococcus oceani (strain ATCC 19707 / BCRC 17464 / JCM 30415 / NCIMB 11848 / C-107).